Here is a 464-residue protein sequence, read N- to C-terminus: ATP synthase subunit beta (464 aa).

Residue 153 to 160 (GGAGVGKT) participates in ATP binding.

This sequence belongs to the ATPase alpha/beta chains family. In terms of assembly, F-type ATPases have 2 components, CF(1) - the catalytic core - and CF(0) - the membrane proton channel. CF(1) has five subunits: alpha(3), beta(3), gamma(1), delta(1), epsilon(1). CF(0) has three main subunits: a(1), b(2) and c(9-12). The alpha and beta chains form an alternating ring which encloses part of the gamma chain. CF(1) is attached to CF(0) by a central stalk formed by the gamma and epsilon chains, while a peripheral stalk is formed by the delta and b chains.

It is found in the cell inner membrane. It catalyses the reaction ATP + H2O + 4 H(+)(in) = ADP + phosphate + 5 H(+)(out). Produces ATP from ADP in the presence of a proton gradient across the membrane. The catalytic sites are hosted primarily by the beta subunits. The chain is ATP synthase subunit beta from Burkholderia orbicola (strain MC0-3).